The following is a 606-amino-acid chain: 4-hydroxy-3-methylbut-2-en-1-yl diphosphate synthase (flavodoxin) (606 aa).

4 residues coordinate [4Fe-4S] cluster: C513, C516, C547, and E554.

The protein belongs to the IspG family. The cofactor is [4Fe-4S] cluster.

The catalysed reaction is (2E)-4-hydroxy-3-methylbut-2-enyl diphosphate + oxidized [flavodoxin] + H2O + 2 H(+) = 2-C-methyl-D-erythritol 2,4-cyclic diphosphate + reduced [flavodoxin]. The protein operates within isoprenoid biosynthesis; isopentenyl diphosphate biosynthesis via DXP pathway; isopentenyl diphosphate from 1-deoxy-D-xylulose 5-phosphate: step 5/6. In terms of biological role, converts 2C-methyl-D-erythritol 2,4-cyclodiphosphate (ME-2,4cPP) into 1-hydroxy-2-methyl-2-(E)-butenyl 4-diphosphate. This chain is 4-hydroxy-3-methylbut-2-en-1-yl diphosphate synthase (flavodoxin), found in Chlamydia caviae (strain ATCC VR-813 / DSM 19441 / 03DC25 / GPIC) (Chlamydophila caviae).